Consider the following 454-residue polypeptide: Probable spastin homolog Bm1_53365 (454 aa).

218–225 provides a ligand contact to ATP; that stretch reads GPPGNGKT.

It belongs to the AAA ATPase family. Spastin subfamily. Homohexamer. The homohexamer is stabilized by ATP-binding. The homohexamer may adopt a ring conformation through which microtubules pass prior to being severed. Interacts with microtubules.

It is found in the cytoplasm. The protein localises to the cytoskeleton. The protein resides in the perinuclear region. The enzyme catalyses n ATP + n H2O + a microtubule = n ADP + n phosphate + (n+1) alpha/beta tubulin heterodimers.. Functionally, severs microtubules, probably in an ATP-dependent fashion. The protein is Probable spastin homolog Bm1_53365 of Brugia malayi (Filarial nematode worm).